Reading from the N-terminus, the 133-residue chain is ATP synthase epsilon chain, chloroplastic (133 aa).

Belongs to the ATPase epsilon chain family. F-type ATPases have 2 components, CF(1) - the catalytic core - and CF(0) - the membrane proton channel. CF(1) has five subunits: alpha(3), beta(3), gamma(1), delta(1), epsilon(1). CF(0) has three main subunits: a, b and c.

The protein localises to the plastid. It localises to the chloroplast thylakoid membrane. Produces ATP from ADP in the presence of a proton gradient across the membrane. This Trieres chinensis (Marine centric diatom) protein is ATP synthase epsilon chain, chloroplastic.